A 131-amino-acid chain; its full sequence is MPTTQQLLRKGRKVLQKKSKVPALKGSPFRRGVCTVVKTTTPKKPNSALRKIARVRLSSGFEVTAYIPGEGHNLQEHSVVLIRGGRVKDLPGVRYHIVRGSLDTQGVKDRNKSRSKYGTKKPKAGAAAAKK.

The segment at 1–22 (MPTTQQLLRKGRKVLQKKSKVP) is disordered. A compositionally biased stretch (basic residues) spans 9 to 20 (RKGRKVLQKKSK). Position 89 is a 3-methylthioaspartic acid (Asp-89). A disordered region spans residues 102 to 131 (LDTQGVKDRNKSRSKYGTKKPKAGAAAAKK). Basic residues predominate over residues 113 to 131 (SRSKYGTKKPKAGAAAAKK).

This sequence belongs to the universal ribosomal protein uS12 family. In terms of assembly, part of the 30S ribosomal subunit. Contacts proteins S8 and S17. May interact with IF1 in the 30S initiation complex.

With S4 and S5 plays an important role in translational accuracy. Its function is as follows. Interacts with and stabilizes bases of the 16S rRNA that are involved in tRNA selection in the A site and with the mRNA backbone. Located at the interface of the 30S and 50S subunits, it traverses the body of the 30S subunit contacting proteins on the other side and probably holding the rRNA structure together. The combined cluster of proteins S8, S12 and S17 appears to hold together the shoulder and platform of the 30S subunit. The chain is Small ribosomal subunit protein uS12 from Deinococcus radiodurans (strain ATCC 13939 / DSM 20539 / JCM 16871 / CCUG 27074 / LMG 4051 / NBRC 15346 / NCIMB 9279 / VKM B-1422 / R1).